A 107-amino-acid chain; its full sequence is Phosphoribosyl-ATP pyrophosphatase (107 aa).

This sequence belongs to the PRA-PH family.

Its subcellular location is the cytoplasm. It catalyses the reaction 1-(5-phospho-beta-D-ribosyl)-ATP + H2O = 1-(5-phospho-beta-D-ribosyl)-5'-AMP + diphosphate + H(+). The protein operates within amino-acid biosynthesis; L-histidine biosynthesis; L-histidine from 5-phospho-alpha-D-ribose 1-diphosphate: step 2/9. The sequence is that of Phosphoribosyl-ATP pyrophosphatase from Nitrobacter hamburgensis (strain DSM 10229 / NCIMB 13809 / X14).